We begin with the raw amino-acid sequence, 298 residues long: MKVLWAALVVTLLAGCRADVEPEVEVREPAVWQSGQPWELALSRFWDYLRWVQTLSDQVQEELLSNQVTQELTLLIEDTMKEVKAYKAELEKELGPVAEDTKARLAKELQAAQARLGADMEEVRNRLSQYRSEVQAMLGQSSEELRARLTSHPRKMKRRLQRDIDELQKRMAVYKAGAQEGAERGVSAIRERLGSLIEQGRLQALASQPLQERAQAWGEQMRGRLEKVGSQARDRLEEVREQMEEVRVKVEEQAEAFQARLKSWFEPMMEDMRRQWAELIQKVQVAVGASTSAPSQEP.

A signal peptide spans 1–18 (MKVLWAALVVTLLAGCRA). A run of 8 repeats spans residues 74–95 (LLIEDTMKEVKAYKAELEKELG), 96–117 (PVAEDTKARLAKELQAAQARLG), 118–139 (ADMEEVRNRLSQYRSEVQAMLG), 140–161 (QSSEELRARLTSHPRKMKRRLQ), 162–183 (RDIDELQKRMAVYKAGAQEGAE), 184–204 (RGVSAIRERLGSLIEQGRLQA), 205–222 (LASQPLQERAQAWGEQMR), and 223–244 (GRLEKVGSQARDRLEEVREQME). The tract at residues 74–244 (LLIEDTMKEV…RLEEVREQME (171 aa)) is 8 X 22 AA approximate tandem repeats. Methionine 137 is modified (methionine sulfoxide). The residue at position 141 (serine 141) is a Phosphoserine. An LDL and other lipoprotein receptors binding region spans residues 152 to 162 (HPRKMKRRLQR). 156 to 159 (MKRR) serves as a coordination point for heparin. 218-225 (GEQMRGRL) is a binding site for heparin. The specificity for association with VLDL stretch occupies residues 260 to 272 (RLKSWFEPMMEDM).

Belongs to the apolipoprotein A1/A4/E family. Homotetramer. May interact with ABCA1; functionally associated with ABCA1 in the biogenesis of HDLs. May interact with APP/A4 amyloid-beta peptide; the interaction is extremely stable in vitro but its physiological significance is unclear. May interact with MAPT. May interact with MAP2. In the cerebrospinal fluid, interacts with secreted SORL1. Interacts with PMEL; this allows the loading of PMEL luminal fragment on ILVs to induce fibril nucleation. APOE exists as multiple glycosylated and sialylated glycoforms within cells and in plasma. The extent of glycosylation and sialylation are tissue and context specific. In terms of processing, glycated in plasma VLDL. Post-translationally, phosphorylated by FAM20C in the extracellular medium.

The protein localises to the secreted. It is found in the extracellular space. Its subcellular location is the extracellular matrix. The protein resides in the extracellular vesicle. It localises to the endosome. The protein localises to the multivesicular body. Its function is as follows. APOE is an apolipoprotein, a protein associating with lipid particles, that mainly functions in lipoprotein-mediated lipid transport between organs via the plasma and interstitial fluids. APOE is a core component of plasma lipoproteins and is involved in their production, conversion and clearance. Apolipoproteins are amphipathic molecules that interact both with lipids of the lipoprotein particle core and the aqueous environment of the plasma. As such, APOE associates with chylomicrons, chylomicron remnants, very low density lipoproteins (VLDL) and intermediate density lipoproteins (IDL) but shows a preferential binding to high-density lipoproteins (HDL). It also binds a wide range of cellular receptors including the LDL receptor/LDLR and the very low-density lipoprotein receptor/VLDLR that mediate the cellular uptake of the APOE-containing lipoprotein particles. Finally, APOE also has a heparin-binding activity and binds heparan-sulfate proteoglycans on the surface of cells, a property that supports the capture and the receptor-mediated uptake of APOE-containing lipoproteins by cells. This is Apolipoprotein E (APOE) from Cavia porcellus (Guinea pig).